The chain runs to 357 residues: Type II methyltransferase M1.HgaI (357 aa).

One can recognise an SAM-dependent MTase C5-type domain in the interval Ile5 to Asn357. Cys83 is an active-site residue.

This sequence belongs to the class I-like SAM-binding methyltransferase superfamily. C5-methyltransferase family.

The catalysed reaction is a 2'-deoxycytidine in DNA + S-adenosyl-L-methionine = a 5-methyl-2'-deoxycytidine in DNA + S-adenosyl-L-homocysteine + H(+). Its function is as follows. A methylase that recognizes DNA with the sequence 5'-GCGTC-3', methylates C-2, and protects the DNA from cleavage by the HgaI endonuclease. This chain is Type II methyltransferase M1.HgaI (hgaIAM), found in Avibacterium volantium (Pasteurella volantium).